Consider the following 423-residue polypeptide: Cytochrome b mRNA maturase bI2 (423 aa).

The Mitochondrial matrix portion of the chain corresponds to Met-1–Asn-31. Positions Met-1–Gly-143 are cytochrome b. Residues Met-32 to Met-52 form a helical membrane-spanning segment. At His-53 to Asn-84 the chain is on the mitochondrial intermembrane side. A helical transmembrane segment spans residues Gly-85 to Ser-105. The Mitochondrial matrix segment spans residues Tyr-106–Asn-115. Residues Val-116–Tyr-136 traverse the membrane as a helical segment. The Mitochondrial intermembrane segment spans residues Gly-137–Asn-153. The tract at residues Asn-144 to Leu-423 is maturase. A helical membrane pass occupies residues Met-154–Met-174. Topologically, residues Met-175–Leu-423 are mitochondrial matrix.

In the N-terminal section; belongs to the cytochrome b family. This sequence in the C-terminal section; belongs to the LAGLIDADG endonuclease family.

Its subcellular location is the mitochondrion inner membrane. This protein is responsible for splicing and maturation of cytochrome b mRNA. Specifically, it may be responsible for the splicing specificity of the second intron. The chain is Cytochrome b mRNA maturase bI2 (BI2) from Saccharomyces cerevisiae (strain ATCC 204508 / S288c) (Baker's yeast).